We begin with the raw amino-acid sequence, 139 residues long: Invertebrate-type lysozyme 2 (139 aa).

A signal peptide spans 1 to 18 (MFVKAILLLSIAVAYASA). The 120-residue stretch at 19 to 138 (DCLHCICMRE…WKGVHSCCGC (120 aa)) folds into the I-type lysozyme domain. 7 disulfide bridges follow: Cys-20–Cys-106, Cys-23–Cys-138, Cys-25–Cys-31, Cys-36–Cys-45, Cys-58–Cys-86, Cys-76–Cys-82, and Cys-98–Cys-120. Residue Glu-28 is the Proton donor of the active site. Residue Asp-39 is the Nucleophile of the active site. 51-57 (KIPYYED) is a binding site for substrate. Residues Tyr-90 and 113–115 (HNG) contribute to the substrate site.

It belongs to the glycosyl hydrolase 22 family. Type-I lysozyme subfamily. As to expression, expressed in pharyngeal muscle cell pm3, nerve ring and intestine.

The catalysed reaction is Hydrolysis of (1-&gt;4)-beta-linkages between N-acetylmuramic acid and N-acetyl-D-glucosamine residues in a peptidoglycan and between N-acetyl-D-glucosamine residues in chitodextrins.. Has bacteriolytic activity against Gram-positive bacteria. May play a role in resistance to Gram-positive bacterium S.aureus infection. This is Invertebrate-type lysozyme 2 from Caenorhabditis elegans.